The primary structure comprises 316 residues: Golgi to ER traffic protein 2 (316 aa).

The tract at residues 1–75 (MATELSDAEK…SDEEVEKSTK (75 aa)) is disordered. The Cytoplasmic portion of the chain corresponds to 1 to 167 (MATELSDAEK…LKYYKFKVSK (167 aa)). Over residues 7–19 (DAEKRKLLRERRQ) the composition is skewed to basic and acidic residues. Polar residues-rich tracts occupy residues 22 to 48 (FSNG…STSV) and 56 to 65 (PSGNKKSSNV). A helical membrane pass occupies residues 168-187 (LKSYIILIKWALLAPYVYFI). Topologically, residues 188–209 (MHPNPTVLQASNLLSQIVERSN) are lumenal. Residues 210–229 (FFSIFTGLEIVFISIYYQML) form a helical membrane-spanning segment. Topologically, residues 230-276 (KKLQRDNNVTATQNAGGILKYLTMIPEGILPIRNIQGKIGLALEYFD) are cytoplasmic. Residues 277–297 (VASMYVTDICFVLVLFGVMKY) form a helical membrane-spanning segment. The Lumenal segment spans residues 298–316 (YHSSFPISVPIEPPIAGIQ).

The protein belongs to the GET2 family. Component of the Golgi to ER traffic (GET) complex, which is composed of GET1, GET2 and GET3. Within the complex, GET1 and GET2 form a heterotetramer which is stabilized by phosphatidylinositol binding and which binds to the GET3 homodimer.

The protein resides in the endoplasmic reticulum membrane. It is found in the golgi apparatus membrane. Its function is as follows. Required for the post-translational delivery of tail-anchored (TA) proteins to the endoplasmic reticulum. Together with GET1, acts as a membrane receptor for soluble GET3, which recognizes and selectively binds the transmembrane domain of TA proteins in the cytosol. The GET complex cooperates with the HDEL receptor ERD2 to mediate the ATP-dependent retrieval of resident ER proteins that contain a C-terminal H-D-E-L retention signal from the Golgi to the ER. The sequence is that of Golgi to ER traffic protein 2 from Kluyveromyces lactis (strain ATCC 8585 / CBS 2359 / DSM 70799 / NBRC 1267 / NRRL Y-1140 / WM37) (Yeast).